Reading from the N-terminus, the 224-residue chain is Urease accessory protein UreF (224 aa).

The protein belongs to the UreF family. UreD, UreF and UreG form a complex that acts as a GTP-hydrolysis-dependent molecular chaperone, activating the urease apoprotein by helping to assemble the nickel containing metallocenter of UreC. The UreE protein probably delivers the nickel.

It is found in the cytoplasm. Required for maturation of urease via the functional incorporation of the urease nickel metallocenter. This Nitrosococcus oceani (strain ATCC 19707 / BCRC 17464 / JCM 30415 / NCIMB 11848 / C-107) protein is Urease accessory protein UreF.